A 159-amino-acid polypeptide reads, in one-letter code: Transcription elongation factor GreA (159 aa).

Residues 44-75 (SENAEYDAAREQQSQTEARIADLENKLSTATI) are a coiled coil.

This sequence belongs to the GreA/GreB family.

In terms of biological role, necessary for efficient RNA polymerase transcription elongation past template-encoded arresting sites. The arresting sites in DNA have the property of trapping a certain fraction of elongating RNA polymerases that pass through, resulting in locked ternary complexes. Cleavage of the nascent transcript by cleavage factors such as GreA or GreB allows the resumption of elongation from the new 3'terminus. GreA releases sequences of 2 to 3 nucleotides. In Chlorobium limicola (strain DSM 245 / NBRC 103803 / 6330), this protein is Transcription elongation factor GreA.